A 101-amino-acid polypeptide reads, in one-letter code: NAD(P)H-quinone oxidoreductase subunit 4L, chloroplastic (101 aa).

3 helical membrane-spanning segments follow: residues 2–22 (ILEHVLVLSAYLFLIGLYGLI), 32–52 (MCLELILNAVNMNFVTFSDFF), and 61–81 (IFCIFVIAIAAAEAAIGLAIV).

This sequence belongs to the complex I subunit 4L family. NDH is composed of at least 16 different subunits, 5 of which are encoded in the nucleus.

Its subcellular location is the plastid. The protein localises to the chloroplast thylakoid membrane. It catalyses the reaction a plastoquinone + NADH + (n+1) H(+)(in) = a plastoquinol + NAD(+) + n H(+)(out). The enzyme catalyses a plastoquinone + NADPH + (n+1) H(+)(in) = a plastoquinol + NADP(+) + n H(+)(out). Functionally, NDH shuttles electrons from NAD(P)H:plastoquinone, via FMN and iron-sulfur (Fe-S) centers, to quinones in the photosynthetic chain and possibly in a chloroplast respiratory chain. The immediate electron acceptor for the enzyme in this species is believed to be plastoquinone. Couples the redox reaction to proton translocation, and thus conserves the redox energy in a proton gradient. The sequence is that of NAD(P)H-quinone oxidoreductase subunit 4L, chloroplastic from Arabidopsis thaliana (Mouse-ear cress).